The following is a 157-amino-acid chain: UPF0756 membrane protein BH3161 (157 aa).

The next 4 helical transmembrane spans lie at 1 to 21 (MISQATIFMLVLLVIALLAKN), 54 to 74 (LGVTIITIAVLTPIATGEIGF), 87 to 107 (WVALLSGVVVALIAASGIDLL), and 117 to 137 (LVLGTILAVAVFNGVAVGPLI).

It belongs to the UPF0756 family.

It localises to the cell membrane. The polypeptide is UPF0756 membrane protein BH3161 (Halalkalibacterium halodurans (strain ATCC BAA-125 / DSM 18197 / FERM 7344 / JCM 9153 / C-125) (Bacillus halodurans)).